We begin with the raw amino-acid sequence, 333 residues long: Electron transfer flavoprotein subunit alpha, mitochondrial (333 aa).

A mitochondrion-targeting transit peptide spans methionine 1–phenylalanine 19. The segment at glutamine 20–leucine 204 is domain I. The residue at position 59 (lysine 59) is an N6-acetyllysine; alternate. Lysine 59 is subject to N6-succinyllysine; alternate. Lysine 62 bears the N6-acetyllysine mark. Residue lysine 69 is modified to N6-acetyllysine; alternate. Lysine 69 is subject to N6-succinyllysine; alternate. Position 75 is an N6-acetyllysine (lysine 75). A Phosphothreonine modification is found at threonine 93. N6-acetyllysine occurs at positions 101 and 139. Phosphoserine is present on serine 140. At lysine 158 the chain carries N6-acetyllysine; alternate. An N6-succinyllysine; alternate modification is found at lysine 158. At lysine 164 the chain carries N6-acetyllysine. Position 187 is an N6-succinyllysine (lysine 187). Lysine 203 is subject to N6-acetyllysine; alternate. The residue at position 203 (lysine 203) is an N6-succinyllysine; alternate. Residues threonine 205–lysine 333 are domain II. At lysine 216 the chain carries N6-succinyllysine. Residue arginine 223 participates in FAD binding. N6-acetyllysine; alternate occurs at positions 226 and 232. Lysine 226 and lysine 232 each carry N6-succinyllysine; alternate. FAD is bound by residues serine 248, valine 263–threonine 266, serine 281–histidine 286, and asparagine 300. At lysine 301 the chain carries N6-succinyllysine. An FAD-binding site is contributed by aspartate 318 to leucine 319.

This sequence belongs to the ETF alpha-subunit/FixB family. In terms of assembly, heterodimer composed of ETFA and ETFB. Identified in a complex that contains ETFA, ETFB and ETFRF1. Interaction with ETFRF1 promotes dissociation of the bound FAD and loss of electron transfer activity. Interacts with TASOR. Requires FAD as cofactor.

It localises to the mitochondrion matrix. Its function is as follows. Heterodimeric electron transfer flavoprotein that accepts electrons from several mitochondrial dehydrogenases, including acyl-CoA dehydrogenases, glutaryl-CoA and sarcosine dehydrogenase. It transfers the electrons to the main mitochondrial respiratory chain via ETF-ubiquinone oxidoreductase (ETF dehydrogenase). Required for normal mitochondrial fatty acid oxidation and normal amino acid metabolism. This is Electron transfer flavoprotein subunit alpha, mitochondrial (ETFA) from Pongo abelii (Sumatran orangutan).